The following is a 172-amino-acid chain: Adenine phosphoribosyltransferase (172 aa).

This sequence belongs to the purine/pyrimidine phosphoribosyltransferase family. In terms of assembly, homodimer.

The protein localises to the cytoplasm. It catalyses the reaction AMP + diphosphate = 5-phospho-alpha-D-ribose 1-diphosphate + adenine. Its pathway is purine metabolism; AMP biosynthesis via salvage pathway; AMP from adenine: step 1/1. In terms of biological role, catalyzes a salvage reaction resulting in the formation of AMP, that is energically less costly than de novo synthesis. The protein is Adenine phosphoribosyltransferase of Clostridium botulinum (strain Alaska E43 / Type E3).